Here is a 564-residue protein sequence, read N- to C-terminus: CTP synthase (564 aa).

Residues 1–265 (MTKFVFVTGG…DEIVCHRLGI (265 aa)) are amidoligase domain. Ser-13 contacts CTP. Residue Ser-13 participates in UTP binding. Residues 14 to 19 (SLGKGI) and Asp-71 each bind ATP. Residues Asp-71 and Glu-139 each contribute to the Mg(2+) site. CTP contacts are provided by residues 146-148 (DIE), 186-191 (KTKPTQ), and Lys-222. UTP contacts are provided by residues 186 to 191 (KTKPTQ) and Lys-222. The Glutamine amidotransferase type-1 domain occupies 290–543 (SIALVGKYVD…VRAAISFADK (254 aa)). Gly-351 contributes to the L-glutamine binding site. The Nucleophile; for glutamine hydrolysis role is filled by Cys-378. Residues 379-382 (LGMQ), Glu-402, and Arg-469 contribute to the L-glutamine site. Residues His-516 and Glu-518 contribute to the active site.

The protein belongs to the CTP synthase family. As to quaternary structure, homotetramer.

The catalysed reaction is UTP + L-glutamine + ATP + H2O = CTP + L-glutamate + ADP + phosphate + 2 H(+). The enzyme catalyses L-glutamine + H2O = L-glutamate + NH4(+). It catalyses the reaction UTP + NH4(+) + ATP = CTP + ADP + phosphate + 2 H(+). It functions in the pathway pyrimidine metabolism; CTP biosynthesis via de novo pathway; CTP from UDP: step 2/2. With respect to regulation, allosterically activated by GTP, when glutamine is the substrate; GTP has no effect on the reaction when ammonia is the substrate. The allosteric effector GTP functions by stabilizing the protein conformation that binds the tetrahedral intermediate(s) formed during glutamine hydrolysis. Inhibited by the product CTP, via allosteric rather than competitive inhibition. Its function is as follows. Catalyzes the ATP-dependent amination of UTP to CTP with either L-glutamine or ammonia as the source of nitrogen. Regulates intracellular CTP levels through interactions with the four ribonucleotide triphosphates. The polypeptide is CTP synthase (Nitrosomonas eutropha (strain DSM 101675 / C91 / Nm57)).